The primary structure comprises 457 residues: Dihydrolipoyllysine-residue acetyltransferase component of pyruvate dehydrogenase complex, mitochondrial (457 aa).

The transit peptide at 1–30 directs the protein to the mitochondrion; the sequence is MLSAALRRRVLAPTHSALRTGFAAHVVRHY. The region spanning 36 to 112 is the Lipoyl-binding domain; sequence HQVIKMPALS…PVGSPIAVLV (77 aa). Residue lysine 77 is modified to N6-lipoyllysine. The interval 129 to 168 is disordered; the sequence is AGGDAAKPAAPKKEEKSESKSESASAPEPTPEPQQYQSQG. Positions 139-149 are enriched in basic and acidic residues; the sequence is PKKEEKSESKS. Lysine 148 is modified (N6-crotonyllysine). In terms of domain architecture, Peripheral subunit-binding (PSBD) spans 179–216; the sequence is NISASAKRLAREKGISIDGLKGTGKNGQITEEDVKKAI. Active-site residues include histidine 430 and aspartate 434.

It belongs to the 2-oxoacid dehydrogenase family. As to quaternary structure, eukaryotic pyruvate dehydrogenase (PDH) complexes are organized as a core consisting of the oligomeric dihydrolipoamide acetyl-transferase (E2), around which are arranged multiple copies of pyruvate dehydrogenase (E1), dihydrolipoamide dehydrogenase (E3) and protein X (E3BP) bound by non-covalent bonds. Interacts with SIR5; the interaction is direct. Requires (R)-lipoate as cofactor. Decrotonylated at 'Lys-148' by SIR5, which inhibits the activity of the pyruvate dehydrogenase complex (PDC).

It is found in the mitochondrion matrix. It carries out the reaction N(6)-[(R)-dihydrolipoyl]-L-lysyl-[protein] + acetyl-CoA = N(6)-[(R)-S(8)-acetyldihydrolipoyl]-L-lysyl-[protein] + CoA. In terms of biological role, the pyruvate dehydrogenase complex catalyzes the overall conversion of pyruvate to acetyl-CoA and CO(2). High pyruvate dehydrogenase complex activity is required for sufficient energy production during germination of conidia. The chain is Dihydrolipoyllysine-residue acetyltransferase component of pyruvate dehydrogenase complex, mitochondrial from Fusarium oxysporum f. sp. lycopersici (strain 4287 / CBS 123668 / FGSC 9935 / NRRL 34936) (Fusarium vascular wilt of tomato).